The chain runs to 99 residues: Small ribosomal subunit protein uS19 (99 aa).

The tract at residues 77-99 is disordered; that stretch reads TRTFHGHSGDKKAKVAKGGPGGR.

The protein belongs to the universal ribosomal protein uS19 family.

Functionally, protein S19 forms a complex with S13 that binds strongly to the 16S ribosomal RNA. The chain is Small ribosomal subunit protein uS19 from Sorangium cellulosum (strain So ce56) (Polyangium cellulosum (strain So ce56)).